We begin with the raw amino-acid sequence, 96 residues long: Large ribosomal subunit protein uL4 (96 aa).

The segment at 77-96 (RAPNKKVKRRELKKNPLKNL) is disordered. Residues 79 to 96 (PNKKVKRRELKKNPLKNL) show a composition bias toward basic residues.

Belongs to the universal ribosomal protein uL4 family. As to quaternary structure, component of the large ribosomal subunit.

The protein resides in the cytoplasm. In terms of biological role, component of the large ribosomal subunit. The ribosome is a large ribonucleoprotein complex responsible for the synthesis of proteins in the cell. This is Large ribosomal subunit protein uL4 (rpl4) from Xenopus tropicalis (Western clawed frog).